The primary structure comprises 541 residues: MKSYTPYFILLWSAVGIAKAAKIIIVPPIMFESHMYIFKTLASALHERGHHTVFLLSEGRDIAPSNHYSLQRYPGIFNSTTSDAFLQSKMRNIFSGRLTAIELFDILDHYTKNCDLMVGNHALIQGLKKEKFDLLLVDPNDMCGFVIAHLLGVKYAVFSTGLWYPAEVGAPAPLAYVPEFNSLLTDRMNLLQRMKNTGVYLISRLGVSFLVLPKYERIMQKYNLLPEKSMYDLVHGSSLWMLCTDVALEFPRPTLPNVVYVGGILTKPASPLPEDLQRWVNGANEHGFVLVSFGAGVKYLSEDIANKLAGALGRLPQKVIWRFSGPKPKNLGNNTKLIEWLPQNDLLGHSKIKAFLSHGGLNSIFETIYHGVPVVGIPLFGDHYDTMTRVQAKGMGILLEWKTVTEKELYEALVKVINNPSYRQRAQKLSEIHKDQPGHPVNRTIYWIDYIIRHNGAHHLRAAVHQISFCQYFLLDIAFVLLLGAALLYFLLSWVTKFIYRKIKSLWSRNKHSTVNGHYHNGILNGKYKRNGHIKHEKKVK.

The signal sequence occupies residues 1–20; that stretch reads MKSYTPYFILLWSAVGIAKA. Asn-78, Asn-333, and Asn-442 each carry an N-linked (GlcNAc...) asparagine glycan. The chain crosses the membrane as a helical span at residues 472 to 492; sequence YFLLDIAFVLLLGAALLYFLL.

This sequence belongs to the UDP-glycosyltransferase family.

The protein resides in the membrane. It localises to the endoplasmic reticulum. It carries out the reaction an N-acylsphing-4-enine + UDP-alpha-D-galactose = a beta-D-galactosyl-(1&lt;-&gt;1')-N-acylsphing-4-enine + UDP + H(+). The enzyme catalyses an N-acyl-sphingoid base + UDP-alpha-D-galactose = a D-galactosylceramide + UDP + H(+). The catalysed reaction is N-(2-hydroxy-hexanoyl)-sphing-4-enine + UDP-alpha-D-galactose = N-(2-hydroxy-hexanoyl)-beta-D-galactosyl-sphing-4-enine + UDP + H(+). It catalyses the reaction N-(2-hydroxy-hexanoyl)-sphinganine + UDP-alpha-D-galactose = N-(2-hydroxyhexanoyl)-beta-D-galactosylsphinganine + UDP + H(+). The protein operates within sphingolipid metabolism; galactosylceramide biosynthesis. Catalyzes the transfer of galactose to ceramide, a key enzymatic step in the biosynthesis of galactocerebrosides, which are abundant sphingolipids of the myelin membrane of the central nervous system and peripheral nervous system. Galactosylates both hydroxy- and non-hydroxy fatty acid-containing ceramides and diglycerides. In Homo sapiens (Human), this protein is 2-hydroxyacylsphingosine 1-beta-galactosyltransferase.